The primary structure comprises 511 residues: Bifunctional purine biosynthesis protein PurH (511 aa).

The 145-residue stretch at 1 to 145 (MKKRALVSVS…KNHKFVSVIV (145 aa)) folds into the MGS-like domain.

This sequence belongs to the PurH family.

It catalyses the reaction (6R)-10-formyltetrahydrofolate + 5-amino-1-(5-phospho-beta-D-ribosyl)imidazole-4-carboxamide = 5-formamido-1-(5-phospho-D-ribosyl)imidazole-4-carboxamide + (6S)-5,6,7,8-tetrahydrofolate. It carries out the reaction IMP + H2O = 5-formamido-1-(5-phospho-D-ribosyl)imidazole-4-carboxamide. The protein operates within purine metabolism; IMP biosynthesis via de novo pathway; 5-formamido-1-(5-phospho-D-ribosyl)imidazole-4-carboxamide from 5-amino-1-(5-phospho-D-ribosyl)imidazole-4-carboxamide (10-formyl THF route): step 1/1. It functions in the pathway purine metabolism; IMP biosynthesis via de novo pathway; IMP from 5-formamido-1-(5-phospho-D-ribosyl)imidazole-4-carboxamide: step 1/1. This Bacillus cereus (strain 03BB102) protein is Bifunctional purine biosynthesis protein PurH.